The sequence spans 121 residues: D-ornithine 4,5-aminomutase subunit alpha (121 aa).

As to quaternary structure, heterotetramer of 2 alpha (OraS) and 2 beta (OraE) subunits.

The enzyme catalyses D-ornithine = (2R,4S)-2,4-diaminopentanoate. With respect to regulation, increased activity in the presence of dithiothreitol (DTT) in vitro. Inhibited by 1 mM potassium phosphate and potassium chloride. Inhibited by L-alpha-ornithine, D,L-alpha-lysine, L-beta-lysine (50%-60%), L-alpha-lysine (26%) and by delta-amino-n-valeric acid to a lesser extent. Significant decrease in activity is observed in the presence of 0.2 mM p-chloromercuribenzoate, N-ethylmaleimide and also by 2 mM iodoacetate to a lesser extent but not inhibited by arsenite. Component of a complex that catalyzes the reversible migration of the omega amino group of D-ornithine to C-4 to form (2R,4S)-2,4-diaminopentanoic acid. The role of OraS remains obscure; however, it seems to be required for a correct folding of the OraE subunit. The complex is active only on D-ornithine and 2,4-diaminopentanoic acid and not active on L-ornithine, L-beta-lysine, L-alpha-lysine or D-alpha-lysine. This Acetoanaerobium sticklandii (strain ATCC 12662 / DSM 519 / JCM 1433 / CCUG 9281 / NCIMB 10654 / HF) (Clostridium sticklandii) protein is D-ornithine 4,5-aminomutase subunit alpha (oraS).